Reading from the N-terminus, the 78-residue chain is Large ribosomal subunit protein bL28 (78 aa).

A disordered region spans residues 1-20; the sequence is MSRVCQVTGKGPVTGNNISH.

The protein belongs to the bacterial ribosomal protein bL28 family.

In Azotobacter vinelandii (strain DJ / ATCC BAA-1303), this protein is Large ribosomal subunit protein bL28.